We begin with the raw amino-acid sequence, 325 residues long: Dimethylsulfide dehydrogenase subunit beta (325 aa).

3 consecutive 4Fe-4S ferredoxin-type domains span residues Ile-6 to Arg-35, Ser-123 to Glu-154, and Gly-156 to Gln-185. Positions 15, 18, 21, 25, 132, 135, and 140 each coordinate [4Fe-4S] cluster. Residues Cys-144, Cys-165, and Cys-171 each contribute to the [3Fe-4S] cluster site. The [4Fe-4S] cluster site is built by Cys-175, Cys-192, Cys-195, Cys-207, and Cys-211.

Heterotrimer of alpha, beta and gamma subunits. It depends on [3Fe-4S] cluster as a cofactor. [4Fe-4S] cluster serves as cofactor.

Its subcellular location is the periplasm. In terms of biological role, electron transfer subunit of the dehydrogenase during anaerobic growth on dimethyl sulfide. This is Dimethylsulfide dehydrogenase subunit beta (ddhB) from Rhodovulum sulfidophilum (Rhodobacter sulfidophilus).